The sequence spans 305 residues: Oxygen-dependent coproporphyrinogen-III oxidase (305 aa).

Serine 98 contributes to the substrate binding site. A divalent metal cation contacts are provided by histidine 102 and histidine 112. Residue histidine 112 is the Proton donor of the active site. 114-116 contributes to the substrate binding site; that stretch reads NVR. A divalent metal cation contacts are provided by histidine 151 and histidine 181. Residues 246–281 form an important for dimerization region; it reads YVEFNLVYDRGTLFGLQSGGRTESILMSMPPLARWE. 264–266 is a substrate binding site; sequence GGR.

It belongs to the aerobic coproporphyrinogen-III oxidase family. As to quaternary structure, homodimer. Requires a divalent metal cation as cofactor.

Its subcellular location is the cytoplasm. It carries out the reaction coproporphyrinogen III + O2 + 2 H(+) = protoporphyrinogen IX + 2 CO2 + 2 H2O. Its pathway is porphyrin-containing compound metabolism; protoporphyrin-IX biosynthesis; protoporphyrinogen-IX from coproporphyrinogen-III (O2 route): step 1/1. Its function is as follows. Involved in the heme biosynthesis. Catalyzes the aerobic oxidative decarboxylation of propionate groups of rings A and B of coproporphyrinogen-III to yield the vinyl groups in protoporphyrinogen-IX. This Vibrio atlanticus (strain LGP32) (Vibrio splendidus (strain Mel32)) protein is Oxygen-dependent coproporphyrinogen-III oxidase.